A 159-amino-acid polypeptide reads, in one-letter code: SsrA-binding protein (159 aa).

The protein belongs to the SmpB family.

Its subcellular location is the cytoplasm. Functionally, required for rescue of stalled ribosomes mediated by trans-translation. Binds to transfer-messenger RNA (tmRNA), required for stable association of tmRNA with ribosomes. tmRNA and SmpB together mimic tRNA shape, replacing the anticodon stem-loop with SmpB. tmRNA is encoded by the ssrA gene; the 2 termini fold to resemble tRNA(Ala) and it encodes a 'tag peptide', a short internal open reading frame. During trans-translation Ala-aminoacylated tmRNA acts like a tRNA, entering the A-site of stalled ribosomes, displacing the stalled mRNA. The ribosome then switches to translate the ORF on the tmRNA; the nascent peptide is terminated with the 'tag peptide' encoded by the tmRNA and targeted for degradation. The ribosome is freed to recommence translation, which seems to be the essential function of trans-translation. The protein is SsrA-binding protein of Frankia casuarinae (strain DSM 45818 / CECT 9043 / HFP020203 / CcI3).